Consider the following 176-residue polypeptide: Peptide methionine sulfoxide reductase MsrA (176 aa).

Residue Cys10 is part of the active site.

This sequence belongs to the MsrA Met sulfoxide reductase family.

The enzyme catalyses L-methionyl-[protein] + [thioredoxin]-disulfide + H2O = L-methionyl-(S)-S-oxide-[protein] + [thioredoxin]-dithiol. The catalysed reaction is [thioredoxin]-disulfide + L-methionine + H2O = L-methionine (S)-S-oxide + [thioredoxin]-dithiol. Has an important function as a repair enzyme for proteins that have been inactivated by oxidation. Catalyzes the reversible oxidation-reduction of methionine sulfoxide in proteins to methionine. In Chromobacterium violaceum (strain ATCC 12472 / DSM 30191 / JCM 1249 / CCUG 213 / NBRC 12614 / NCIMB 9131 / NCTC 9757 / MK), this protein is Peptide methionine sulfoxide reductase MsrA.